Reading from the N-terminus, the 401-residue chain is Chorismate synthase (401 aa).

The NADP(+) site is built by R40 and R46. Residues 135-137, 256-257, G302, 317-321, and R343 each bind FMN; these read RAS, QA, and KPISS.

This sequence belongs to the chorismate synthase family. As to quaternary structure, homotetramer. The cofactor is FMNH2.

It carries out the reaction 5-O-(1-carboxyvinyl)-3-phosphoshikimate = chorismate + phosphate. The protein operates within metabolic intermediate biosynthesis; chorismate biosynthesis; chorismate from D-erythrose 4-phosphate and phosphoenolpyruvate: step 7/7. In terms of biological role, catalyzes the anti-1,4-elimination of the C-3 phosphate and the C-6 proR hydrogen from 5-enolpyruvylshikimate-3-phosphate (EPSP) to yield chorismate, which is the branch point compound that serves as the starting substrate for the three terminal pathways of aromatic amino acid biosynthesis. This reaction introduces a second double bond into the aromatic ring system. In Saccharopolyspora erythraea (strain ATCC 11635 / DSM 40517 / JCM 4748 / NBRC 13426 / NCIMB 8594 / NRRL 2338), this protein is Chorismate synthase.